Here is a 124-residue protein sequence, read N- to C-terminus: Magnetosome protein MamC (124 aa).

The Cytoplasmic portion of the chain corresponds to 2-8 (PFHLAPY). The helical transmembrane segment at 9-29 (LAKSVPGVGVLGALVGGAAAL) threads the bilayer. The Lumenal segment spans residues 30–64 (AKNVRLLKEKRITNTEAAIDTGKETVGAGLATALS). Residues 36–56 (LKEKRITNTEAAIDTGKETVG) form an MIC, when fused with the C-terminus of maltose-binding protein (MBP) or expressed as a fragment, improves quality of iron particles during precipitation experiments, binds magnetite region. The chain crosses the membrane as a helical span at residues 65–85 (AVAATAVGGGLVVSLGTALVA). Residues 86-124 (GVAAKYAWDRGVDLVEKELNRGKAANGASDEDILRDELA) lie on the Cytoplasmic side of the membrane.

This sequence belongs to the magnetosome MamC family. As to quaternary structure, probably interacts with MamA.

The protein localises to the magnetosome membrane. Functionally, probably involved in magnetite crystal growth. The lumenal domain may bind the magnetite crystals, affecting crystal size and shape. This is Magnetosome protein MamC from Paramagnetospirillum magneticum (strain ATCC 700264 / AMB-1) (Magnetospirillum magneticum).